The following is a 217-amino-acid chain: Thiopurine S-methyltransferase (217 aa).

Residues Trp-11, Leu-46, Glu-67, and Arg-122 each contribute to the S-adenosyl-L-methionine site.

Belongs to the class I-like SAM-binding methyltransferase superfamily. TPMT family.

The protein localises to the cytoplasm. The enzyme catalyses S-adenosyl-L-methionine + a thiopurine = S-adenosyl-L-homocysteine + a thiopurine S-methylether.. This Vibrio atlanticus (strain LGP32) (Vibrio splendidus (strain Mel32)) protein is Thiopurine S-methyltransferase.